A 515-amino-acid chain; its full sequence is 2-isopropylmalate synthase (515 aa).

Residues 5 to 267 enclose the Pyruvate carboxyltransferase domain; the sequence is VIIFDTTLRD…RTGINHEEIH (263 aa). 4 residues coordinate Mn(2+): D14, H202, H204, and N238. The interval 392–515 is regulatory domain; it reads KLNYLSVQSG…EMKQKKIATV (124 aa).

It belongs to the alpha-IPM synthase/homocitrate synthase family. LeuA type 1 subfamily. As to quaternary structure, homodimer. Mn(2+) is required as a cofactor.

The protein resides in the cytoplasm. It carries out the reaction 3-methyl-2-oxobutanoate + acetyl-CoA + H2O = (2S)-2-isopropylmalate + CoA + H(+). The protein operates within amino-acid biosynthesis; L-leucine biosynthesis; L-leucine from 3-methyl-2-oxobutanoate: step 1/4. In terms of biological role, catalyzes the condensation of the acetyl group of acetyl-CoA with 3-methyl-2-oxobutanoate (2-ketoisovalerate) to form 3-carboxy-3-hydroxy-4-methylpentanoate (2-isopropylmalate). This Vibrio vulnificus (strain CMCP6) protein is 2-isopropylmalate synthase.